The following is a 395-amino-acid chain: S-adenosylmethionine synthase (395 aa).

H16 lines the ATP pocket. D18 is a binding site for Mg(2+). E44 serves as a coordination point for K(+). L-methionine-binding residues include E57 and Q100. Residues 100–110 (QSPDIAQGVDR) are flexible loop. Residues 167–169 (DAK), 233–234 (RF), D242, 248–249 (RK), A265, and K269 each bind ATP. D242 contributes to the L-methionine binding site. Position 273 (K273) interacts with L-methionine.

This sequence belongs to the AdoMet synthase family. In terms of assembly, homotetramer; dimer of dimers. Mg(2+) serves as cofactor. It depends on K(+) as a cofactor.

It is found in the cytoplasm. It catalyses the reaction L-methionine + ATP + H2O = S-adenosyl-L-methionine + phosphate + diphosphate. The protein operates within amino-acid biosynthesis; S-adenosyl-L-methionine biosynthesis; S-adenosyl-L-methionine from L-methionine: step 1/1. Catalyzes the formation of S-adenosylmethionine (AdoMet) from methionine and ATP. The overall synthetic reaction is composed of two sequential steps, AdoMet formation and the subsequent tripolyphosphate hydrolysis which occurs prior to release of AdoMet from the enzyme. In Burkholderia vietnamiensis (strain G4 / LMG 22486) (Burkholderia cepacia (strain R1808)), this protein is S-adenosylmethionine synthase.